The primary structure comprises 346 residues: Guanine nucleotide-binding protein subunit beta-2 (346 aa).

7 WD repeats span residues 57 to 96 (GHINKVNSVHFAGDSRHCVTGSLDGKLIIWDTWTANKVQV), 99 to 138 (LRSAWVMTVAFSPSGNFVACGGMDNQCTVYDVNNRDASGV), 147 to 185 (GYEGFLSSCRFLDDTHLITGSGDMKICHWDLEKGVKTMD), 188 to 227 (GHAGDIAGLSLSPDMNTYITGSVDKTAKLWDVREETHKQM), 230 to 269 (GHEMDVNSVCYHPSGNGFASASEDQTARLYDIRADQQIAL), 274 to 313 (QKNTGFTSCALSTSGRYLLCSGIEGNIHSFDTMKVCHNGM), and 316 to 346 (GHENRITCISLSPNGMCLASTSWDQQVRLWL).

The protein belongs to the WD repeat G protein beta family. G proteins are composed of 3 units, alpha, beta and gamma. Interacts with Ggammae/Guanine nucleotide-binding protein subunit gamma-e.

Functionally, guanine nucleotide-binding proteins (G proteins) are involved as modulators or transducers in various transmembrane signaling systems. The beta and gamma chains are required for the GTPase activity, for replacement of GDP by GTP, and for G protein-effector interaction. In Calliphora vicina (Blue blowfly), this protein is Guanine nucleotide-binding protein subunit beta-2.